The following is a 477-amino-acid chain: Aspartyl/glutamyl-tRNA(Asn/Gln) amidotransferase subunit B (477 aa).

Belongs to the GatB/GatE family. GatB subfamily. As to quaternary structure, heterotrimer of A, B and C subunits.

The enzyme catalyses L-glutamyl-tRNA(Gln) + L-glutamine + ATP + H2O = L-glutaminyl-tRNA(Gln) + L-glutamate + ADP + phosphate + H(+). The catalysed reaction is L-aspartyl-tRNA(Asn) + L-glutamine + ATP + H2O = L-asparaginyl-tRNA(Asn) + L-glutamate + ADP + phosphate + 2 H(+). Allows the formation of correctly charged Asn-tRNA(Asn) or Gln-tRNA(Gln) through the transamidation of misacylated Asp-tRNA(Asn) or Glu-tRNA(Gln) in organisms which lack either or both of asparaginyl-tRNA or glutaminyl-tRNA synthetases. The reaction takes place in the presence of glutamine and ATP through an activated phospho-Asp-tRNA(Asn) or phospho-Glu-tRNA(Gln). This chain is Aspartyl/glutamyl-tRNA(Asn/Gln) amidotransferase subunit B, found in Lactococcus lactis subsp. cremoris (strain MG1363).